Reading from the N-terminus, the 75-residue chain is Small, acid-soluble spore protein Tlp (75 aa).

The protein belongs to the Tlp family.

It is found in the spore core. In Geobacillus kaustophilus (strain HTA426), this protein is Small, acid-soluble spore protein Tlp.